The sequence spans 91 residues: Small ribosomal subunit protein uS19 (91 aa).

It belongs to the universal ribosomal protein uS19 family.

In terms of biological role, protein S19 forms a complex with S13 that binds strongly to the 16S ribosomal RNA. This Prochlorococcus marinus (strain NATL1A) protein is Small ribosomal subunit protein uS19.